A 767-amino-acid chain; its full sequence is DNA topoisomerase 1 (767 aa).

A compositionally biased stretch (basic and acidic residues) spans Met-1–Lys-23. Residues Met-1 to Glu-201 are disordered. Ser-2 carries the post-translational modification N-acetylserine. 2 positions are modified to phosphoserine: Ser-2 and Ser-10. Residues His-24–Lys-39 are compositionally biased toward basic residues. Positions Lys-40 to Asn-110 are enriched in basic and acidic residues. Ser-59 carries the phosphoserine modification. A Glycyl lysine isopeptide (Lys-Gly) (interchain with G-Cter in SUMO2) cross-link involves residue Lys-103. Lys-105 participates in a covalent cross-link: Glycyl lysine isopeptide (Lys-Gly) (interchain with G-Cter in SUMO); alternate. Residue Lys-105 forms a Glycyl lysine isopeptide (Lys-Gly) (interchain with G-Cter in SUMO2); alternate linkage. Ser-114 carries the phosphoserine modification. Residue Lys-119 forms a Glycyl lysine isopeptide (Lys-Gly) (interchain with G-Cter in SUMO); alternate linkage. Residue Lys-119 forms a Glycyl lysine isopeptide (Lys-Gly) (interchain with G-Cter in SUMO2); alternate linkage. Lys-119 participates in a covalent cross-link: Glycyl lysine isopeptide (Lys-Gly) (interchain with G-Cter in SUMO1); alternate. Residues Pro-131 to Glu-168 are compositionally biased toward basic and acidic residues. Residues Lys-136 and Lys-150 each participate in a glycyl lysine isopeptide (Lys-Gly) (interchain with G-Cter in SUMO2) cross-link. Lys-155 participates in a covalent cross-link: Glycyl lysine isopeptide (Lys-Gly) (interchain with G-Cter in SUMO); alternate. Lys-155 participates in a covalent cross-link: Glycyl lysine isopeptide (Lys-Gly) (interchain with G-Cter in SUMO2); alternate. Residues Lys-160 and Lys-166 each participate in a glycyl lysine isopeptide (Lys-Gly) (interchain with G-Cter in SUMO2) cross-link. Lys-174 is covalently cross-linked (Glycyl lysine isopeptide (Lys-Gly) (interchain with G-Cter in SUMO2); alternate). N6-acetyllysine; alternate is present on Lys-174. Basic and acidic residues predominate over residues Lys-181–Glu-201. Lys-206 is covalently cross-linked (Glycyl lysine isopeptide (Lys-Gly) (interchain with G-Cter in SUMO2)). Residue Lys-282 is modified to N6-acetyllysine. A Glycyl lysine isopeptide (Lys-Gly) (interchain with G-Cter in SUMO2) cross-link involves residue Lys-338. 2 interaction with DNA regions span residues Lys-427–Tyr-428 and Arg-490–Lys-495. The Topo IB-type catalytic domain occupies Ser-434 to Phe-767. Residue Ser-508 is modified to Phosphoserine; by CK2. Lys-551 is covalently cross-linked (Glycyl lysine isopeptide (Lys-Gly) (interchain with G-Cter in SUMO2)). Residues Thr-587–Lys-589 are interaction with DNA. Residues Lys-644, Lys-702, and Lys-714 each participate in a glycyl lysine isopeptide (Lys-Gly) (interchain with G-Cter in SUMO2) cross-link. Tyr-725 (O-(3'-phospho-DNA)-tyrosine intermediate) is an active-site residue.

This sequence belongs to the type IB topoisomerase family. In terms of assembly, monomer. Interacts with ERCC6. Interacts with TPRN; TPRN interacts with a number of DNA damage response proteins, is recruited to sites of DNA damage and may play a role in DNA damage repair. Post-translationally, sumoylated. Lys-119 is the main site of sumoylation. Sumoylation plays a role in partitioning TOP1 between nucleoli and nucleoplasm. Levels are dramatically increased on camptothecin (CPT) treatment. Phosphorylation at Ser-508 by CK2 increases binding to supercoiled DNA and sensitivity to camptothecin.

The protein resides in the nucleus. It is found in the nucleolus. It localises to the nucleoplasm. The catalysed reaction is ATP-independent breakage of single-stranded DNA, followed by passage and rejoining.. Specifically inhibited by camptothecin (CPT), a plant alkaloid with antitumor activity. Functionally, releases the supercoiling and torsional tension of DNA introduced during the DNA replication and transcription by transiently cleaving and rejoining one strand of the DNA duplex. Introduces a single-strand break via transesterification at a target site in duplex DNA. The scissile phosphodiester is attacked by the catalytic tyrosine of the enzyme, resulting in the formation of a DNA-(3'-phosphotyrosyl)-enzyme intermediate and the expulsion of a 5'-OH DNA strand. The free DNA strand then rotates around the intact phosphodiester bond on the opposing strand, thus removing DNA supercoils. Finally, in the religation step, the DNA 5'-OH attacks the covalent intermediate to expel the active-site tyrosine and restore the DNA phosphodiester backbone. Regulates the alternative splicing of tissue factor (F3) pre-mRNA in endothelial cells. Involved in the circadian transcription of the core circadian clock component BMAL1 by altering the chromatin structure around the ROR response elements (ROREs) on the BMAL1 promoter. The protein is DNA topoisomerase 1 (TOP1) of Chlorocebus aethiops (Green monkey).